Here is a 300-residue protein sequence, read N- to C-terminus: NADH-ubiquinone oxidoreductase chain 2 (300 aa).

A run of 9 helical transmembrane segments spans residues 4–24 (FFCI…NVLV), 29–49 (FLLM…YVGI), 58–78 (SLGL…IVMM), 87–107 (FWVF…FLTF), 122–142 (FSAF…LFVL), 165–185 (FLSV…MAFL), 201–221 (VLLV…IFVL), 231–251 (FLLF…LWLV), and 267–287 (VLFF…FSKI).

This sequence belongs to the complex I subunit 2 family.

It is found in the mitochondrion inner membrane. The catalysed reaction is a ubiquinone + NADH + 5 H(+)(in) = a ubiquinol + NAD(+) + 4 H(+)(out). Functionally, core subunit of the mitochondrial membrane respiratory chain NADH dehydrogenase (Complex I) that is believed to belong to the minimal assembly required for catalysis. Complex I functions in the transfer of electrons from NADH to the respiratory chain. The immediate electron acceptor for the enzyme is believed to be ubiquinone. The polypeptide is NADH-ubiquinone oxidoreductase chain 2 (ND2) (Ascaris suum (Pig roundworm)).